A 456-amino-acid polypeptide reads, in one-letter code: Bifunctional protein GlmU (456 aa).

Positions 1-229 (MSNSAMSVVI…LSEVEGVNNR (229 aa)) are pyrophosphorylase. Residues 11–14 (LAAG), K25, Q76, 81–82 (GT), 103–105 (YGD), G140, E154, N169, and N227 contribute to the UDP-N-acetyl-alpha-D-glucosamine site. Position 105 (D105) interacts with Mg(2+). Position 227 (N227) interacts with Mg(2+). The segment at 230 to 250 (LQLARLERVYQAEQAEKLLLA) is linker. The N-acetyltransferase stretch occupies residues 251–456 (GVMLRDPARF…QGWQRPVKKK (206 aa)). R333 and K351 together coordinate UDP-N-acetyl-alpha-D-glucosamine. The active-site Proton acceptor is H363. Positions 366 and 377 each coordinate UDP-N-acetyl-alpha-D-glucosamine. Residues A380, 386–387 (NY), S405, A423, and R440 each bind acetyl-CoA.

The protein in the N-terminal section; belongs to the N-acetylglucosamine-1-phosphate uridyltransferase family. In the C-terminal section; belongs to the transferase hexapeptide repeat family. In terms of assembly, homotrimer. Mg(2+) serves as cofactor.

It localises to the cytoplasm. It carries out the reaction alpha-D-glucosamine 1-phosphate + acetyl-CoA = N-acetyl-alpha-D-glucosamine 1-phosphate + CoA + H(+). The enzyme catalyses N-acetyl-alpha-D-glucosamine 1-phosphate + UTP + H(+) = UDP-N-acetyl-alpha-D-glucosamine + diphosphate. It participates in nucleotide-sugar biosynthesis; UDP-N-acetyl-alpha-D-glucosamine biosynthesis; N-acetyl-alpha-D-glucosamine 1-phosphate from alpha-D-glucosamine 6-phosphate (route II): step 2/2. Its pathway is nucleotide-sugar biosynthesis; UDP-N-acetyl-alpha-D-glucosamine biosynthesis; UDP-N-acetyl-alpha-D-glucosamine from N-acetyl-alpha-D-glucosamine 1-phosphate: step 1/1. The protein operates within bacterial outer membrane biogenesis; LPS lipid A biosynthesis. Catalyzes the last two sequential reactions in the de novo biosynthetic pathway for UDP-N-acetylglucosamine (UDP-GlcNAc). The C-terminal domain catalyzes the transfer of acetyl group from acetyl coenzyme A to glucosamine-1-phosphate (GlcN-1-P) to produce N-acetylglucosamine-1-phosphate (GlcNAc-1-P), which is converted into UDP-GlcNAc by the transfer of uridine 5-monophosphate (from uridine 5-triphosphate), a reaction catalyzed by the N-terminal domain. This is Bifunctional protein GlmU from Klebsiella pneumoniae subsp. pneumoniae (strain ATCC 700721 / MGH 78578).